A 492-amino-acid chain; its full sequence is Katanin p60 ATPase-containing subunit A1 (492 aa).

Positions 91–158 are disordered; it reads PAHDGEVWSL…MKPVRAREKK (68 aa). The span at 138-147 shows a compositional bias: polar residues; it reads LPSSKNTNNV. 250–257 serves as a coordination point for ATP; it reads GPPGTGKT.

Belongs to the AAA ATPase family. Katanin p60 subunit A1 subfamily. Can homooligomerize into hexameric rings, which may be promoted by interaction with microtubules. Interacts with katnb1, which may serve as a targeting subunit.

It is found in the cytoplasm. The protein resides in the cytoskeleton. Its subcellular location is the microtubule organizing center. It localises to the centrosome. The protein localises to the spindle pole. It is found in the spindle. It catalyses the reaction n ATP + n H2O + a microtubule = n ADP + n phosphate + (n+1) alpha/beta tubulin heterodimers.. With respect to regulation, ATPase activity is stimulated by microtubules, which promote homooligomerization. ATP-dependent microtubule severing is stimulated by interaction with katnb1. Functionally, catalytic subunit of a complex which severs microtubules in an ATP-dependent manner. Microtubule severing may promote rapid reorganization of cellular microtubule arrays and the release of microtubules from the centrosome following nucleation. In Xenopus tropicalis (Western clawed frog), this protein is Katanin p60 ATPase-containing subunit A1 (katna1).